The chain runs to 480 residues: Sestrin-2 (480 aa).

The residue at position 1 (Met-1) is an N-acetylmethionine. The segment at 20 to 45 (PGGVGDSGPGEEQRESRARRGPRGPS) is disordered. The N-terminal domain; mediates the alkylhydroperoxide reductase activity stretch occupies residues 66 to 239 (GLEALMSSGR…APTPPSEQSS (174 aa)). Cys-125 (cysteine sulfenic acid (-SOH) intermediate) is an active-site residue. Lys-175 is covalently cross-linked (Glycyl lysine isopeptide (Lys-Gly) (interchain with G-Cter in ubiquitin)). Residues 222–252 (ADGSPAPQAPTPPSEQSSPPSRDPLNNSGGF) form a disordered region. Residue Ser-249 is modified to Phosphoserine. Positions 308 to 480 (PHPDMLCFVE…ALRAITRYMT (173 aa)) are C-terminal domain; mediates TORC1 regulation. L-leucine-binding positions include 374–377 (TYNT), Thr-386, and Glu-451.

The protein belongs to the sestrin family. As to quaternary structure, interacts with the GATOR2 complex which is composed of MIOS, SEC13, SEH1L, WDR24 and WDR59; the interaction is negatively regulated by leucine. Conveys leucine availability via direct interaction with SEH1L and WDR24 components of the GATOR2 complex. Interacts with RRAGA, RRAGB, RRAGC and RRAGD; may function as a guanine nucleotide dissociation inhibitor for RRAGs and regulate them. May interact with the TORC2 complex. Interacts with KEAP1, RBX1, SQSTM and ULK1; to regulate the degradation of KEAP1. May also associate with the complex composed of TSC1, TSC2 and the AMP-responsive protein kinase/AMPK to regulate TORC1 signaling. May interact with PRDX1. In terms of processing, phosphorylated by ULK1 at multiple sites. Post-translationally, ubiquitinated at Lys-175 by RNF167 via 'Lys-63'-linked polyubiquitination in response to leucine deprivation: ubiquitination promotes SESN2-interaction with the GATOR2 complex, leading to inhibit the TORC1 signaling pathway. Deubiquitinated at Lys-175 by STAMBPL1, promoting the TORC1 signaling pathway. Ubiquitinated by RNF186; ubiquitination mediates proteasomal degradation.

Its subcellular location is the cytoplasm. The catalysed reaction is a hydroperoxide + L-cysteinyl-[protein] = S-hydroxy-L-cysteinyl-[protein] + an alcohol. Its function is as follows. Functions as an intracellular leucine sensor that negatively regulates the mTORC1 signaling pathway through the GATOR complex. In absence of leucine, binds the GATOR subcomplex GATOR2 and prevents mTORC1 signaling. Binding of leucine to SESN2 disrupts its interaction with GATOR2 thereby activating the TORC1 signaling pathway. This stress-inducible metabolic regulator also plays a role in protection against oxidative and genotoxic stresses. May negatively regulate protein translation in response to endoplasmic reticulum stress, via mTORC1. May positively regulate the transcription by NFE2L2 of genes involved in the response to oxidative stress by facilitating the SQSTM1-mediated autophagic degradation of KEAP1. May also mediate TP53 inhibition of TORC1 signaling upon genotoxic stress. Moreover, may prevent the accumulation of reactive oxygen species (ROS) through the alkylhydroperoxide reductase activity born by the N-terminal domain of the protein. Was originally reported to contribute to oxidative stress resistance by reducing PRDX1. However, this could not be confirmed. This chain is Sestrin-2, found in Pongo abelii (Sumatran orangutan).